The sequence spans 240 residues: Ubiquinone biosynthesis O-methyltransferase (240 aa).

Residues Arg44, Gly64, Asp85, and Met129 each contribute to the S-adenosyl-L-methionine site.

It belongs to the methyltransferase superfamily. UbiG/COQ3 family.

The enzyme catalyses a 3-demethylubiquinol + S-adenosyl-L-methionine = a ubiquinol + S-adenosyl-L-homocysteine + H(+). The catalysed reaction is a 3-(all-trans-polyprenyl)benzene-1,2-diol + S-adenosyl-L-methionine = a 2-methoxy-6-(all-trans-polyprenyl)phenol + S-adenosyl-L-homocysteine + H(+). The protein operates within cofactor biosynthesis; ubiquinone biosynthesis. Functionally, O-methyltransferase that catalyzes the 2 O-methylation steps in the ubiquinone biosynthetic pathway. In Escherichia coli O127:H6 (strain E2348/69 / EPEC), this protein is Ubiquinone biosynthesis O-methyltransferase.